We begin with the raw amino-acid sequence, 189 residues long: MRRILFVALSVMFLAGCPSLPPEQPEPPTPVVPVTPSEKPTPPSEKVPEPPKMSAIDWESTVQPLVEQLVKAHGLENAKLLLVDTVKNNTNGALQTMQATDALRQAISSEHVFELIPQNQVQNARQSLGLSEEDSLGLRSKAIGLARYLNAEYVLYSIVSGNSDKRDIVMQLMLVKTGEILWSGHGDVK.

The first 16 residues, 1–16 (MRRILFVALSVMFLAG), serve as a signal peptide directing secretion. A lipid anchor (N-palmitoyl cysteine) is attached at Cys-17. A lipid anchor (S-diacylglycerol cysteine) is attached at Cys-17. Residues 18–52 (PSLPPEQPEPPTPVVPVTPSEKPTPPSEKVPEPPK) are disordered. The span at 19–45 (SLPPEQPEPPTPVVPVTPSEKPTPPSE) shows a compositional bias: pro residues.

Belongs to the LpoB family. Interacts with PBP1b.

The protein resides in the cell outer membrane. In terms of biological role, regulator of peptidoglycan synthesis that is essential for the function of penicillin-binding protein 1B (PBP1b). The polypeptide is Penicillin-binding protein activator LpoB (Photorhabdus laumondii subsp. laumondii (strain DSM 15139 / CIP 105565 / TT01) (Photorhabdus luminescens subsp. laumondii)).